Consider the following 300-residue polypeptide: Small ribosomal subunit protein uS2 (300 aa).

Residues 228–300 form a disordered region; the sequence is RAGLSADKDA…PAAEAPSTEA (73 aa). Residues 258 to 300 show a composition bias toward low complexity; it reads AAPAAEAAPAAEAAPAAEAAPAAEAQAAPAAEAPAAEAPSTEA.

It belongs to the universal ribosomal protein uS2 family.

This Rhodococcus jostii (strain RHA1) protein is Small ribosomal subunit protein uS2.